The following is a 447-amino-acid chain: N-succinylarginine dihydrolase (447 aa).

Substrate is bound by residues 19–28 (AGLSFGNEAS), N110, and 137–138 (HR). Residue E174 is part of the active site. Residue R214 coordinates substrate. H250 is an active-site residue. The substrate site is built by D252 and N365. C371 (nucleophile) is an active-site residue.

It belongs to the succinylarginine dihydrolase family. In terms of assembly, homodimer.

It carries out the reaction N(2)-succinyl-L-arginine + 2 H2O + 2 H(+) = N(2)-succinyl-L-ornithine + 2 NH4(+) + CO2. It participates in amino-acid degradation; L-arginine degradation via AST pathway; L-glutamate and succinate from L-arginine: step 2/5. Its function is as follows. Catalyzes the hydrolysis of N(2)-succinylarginine into N(2)-succinylornithine, ammonia and CO(2). The sequence is that of N-succinylarginine dihydrolase from Acinetobacter baumannii (strain SDF).